Reading from the N-terminus, the 435-residue chain is Histidinol dehydrogenase (435 aa).

NAD(+) contacts are provided by tyrosine 131, glutamine 189, and asparagine 212. Substrate-binding residues include serine 238, glutamine 260, and histidine 263. 2 residues coordinate Zn(2+): glutamine 260 and histidine 263. Active-site proton acceptor residues include glutamate 327 and histidine 328. Substrate contacts are provided by histidine 328, aspartate 361, glutamate 415, and histidine 420. Aspartate 361 is a binding site for Zn(2+). Zn(2+) is bound at residue histidine 420.

Belongs to the histidinol dehydrogenase family. As to quaternary structure, homodimer. Requires Zn(2+) as cofactor.

The enzyme catalyses L-histidinol + 2 NAD(+) + H2O = L-histidine + 2 NADH + 3 H(+). The protein operates within amino-acid biosynthesis; L-histidine biosynthesis; L-histidine from 5-phospho-alpha-D-ribose 1-diphosphate: step 9/9. Catalyzes the sequential NAD-dependent oxidations of L-histidinol to L-histidinaldehyde and then to L-histidine. This Buchnera aphidicola subsp. Acyrthosiphon pisum (strain APS) (Acyrthosiphon pisum symbiotic bacterium) protein is Histidinol dehydrogenase (hisD).